The primary structure comprises 397 residues: MRSIMENLIKNNPTIAIVAGEVSGDILGGGLIKALKVKYPQARFVGIAGKNMLAESCESLVDIEEIAVMGLVEILKHLPRLLKIRSDIVQKLSALKPDIFIGIDSPEFNLYVEDRLKAQGIKTIHYVSPSVWAWRQNRIYKIAKATNLVLAFLPFEKAFYDRFNVPCRFIGHTMADAIPLNPNRTEACKMLNIDENQRYVAILAGSRGSEVEFLAEPFLQTAQLLKRKYPDLKFLVPLVNEKRRRQFEQVKAKVAPELDLILLDGHGRQAMIAAQATLLASGTAALECMLCKSPMVVGYRMKAATYWLAKRLVKTAYISLPNLLADEMLVPEMIQDECTPEKLVEKLSVYLDETESAVQNRQVLIQRFTELHQLIQCDADSQAAQAVADLLEGKVNG.

The protein belongs to the LpxB family.

It catalyses the reaction a lipid X + a UDP-2-N,3-O-bis[(3R)-3-hydroxyacyl]-alpha-D-glucosamine = a lipid A disaccharide + UDP + H(+). The protein operates within bacterial outer membrane biogenesis; LPS lipid A biosynthesis. Its function is as follows. Condensation of UDP-2,3-diacylglucosamine and 2,3-diacylglucosamine-1-phosphate to form lipid A disaccharide, a precursor of lipid A, a phosphorylated glycolipid that anchors the lipopolysaccharide to the outer membrane of the cell. This Mannheimia succiniciproducens (strain KCTC 0769BP / MBEL55E) protein is Lipid-A-disaccharide synthase.